Here is a 493-residue protein sequence, read N- to C-terminus: MSALGVTVALLVWAAFLLLVSMWRQVHSSWNLPPGPFPLPIIGNLFQLELKNIPKSFTRLAQRFGPVFTLYVGSQRMVVMHGYKAVKEALLDYKDEFSGRGDLPAFHAHRDRGIIFNNGPTWKDIRRFSLTTLRNYGMGKQGNESRIQREAHFLLEALRKTQGQPFDPTFLIGCAPCNVIADILFRKHFDYNDEKFLRLMYLFNENFHLLSTPWLQLYNNFPSFLHYLPGSHRKVIKNVAEVKEYVSERVKEHHQSLDPNCPRDLTDCLLVEMEKEKHSAERLYTMDGITVTVADLFFAGTETTSTTLRYGLLILMKYPEIEEKLHEEIDRVIGPSRIPAIKDRQEMPYMDAVVHEIQRFITLVPSNLPHEATRDTIFRGYLIPKGTVVVPTLDSVLYDNQEFPDPEKFKPEHFLNENGKFKYSDYFKPFSTGKRVCAGEGLARMELFLLLCAILQHFNLKPLVDPKDIDLSPIHIGFGCIPPRYKLCVIPRS.

Position 298 to 303 (298 to 303 (FAGTET)) interacts with substrate. Cysteine 437 is a heme binding site.

Belongs to the cytochrome P450 family. Interacts with chaperones HSP70 and HSP90; this interaction is required for initial targeting to mitochondria. It depends on heme as a cofactor.

The protein resides in the endoplasmic reticulum membrane. It localises to the microsome membrane. Its subcellular location is the mitochondrion inner membrane. The enzyme catalyses an organic molecule + reduced [NADPH--hemoprotein reductase] + O2 = an alcohol + oxidized [NADPH--hemoprotein reductase] + H2O + H(+). It catalyses the reaction (5Z,8Z,11Z)-eicosatrienoate + reduced [NADPH--hemoprotein reductase] + O2 = 19-hydroxy-(5Z,8Z,11Z)-eicosatrienoate + oxidized [NADPH--hemoprotein reductase] + H2O + H(+). It carries out the reaction (5Z,8Z,11Z,14Z,17Z)-eicosapentaenoate + reduced [NADPH--hemoprotein reductase] + O2 = 19-hydroxy-(5Z,8Z,11Z,14Z,17Z)-eicosapentaenoate + oxidized [NADPH--hemoprotein reductase] + H2O + H(+). The catalysed reaction is (4Z,7Z,10Z,13Z,16Z,19Z)-docosahexaenoate + reduced [NADPH--hemoprotein reductase] + O2 = 21-hydroxy-(4Z,7Z,10Z,13Z,16Z,19Z)-docosahexaenoate + oxidized [NADPH--hemoprotein reductase] + H2O + H(+). The enzyme catalyses dodecanoate + reduced [NADPH--hemoprotein reductase] + O2 = 11-hydroxydodecanoate + oxidized [NADPH--hemoprotein reductase] + H2O + H(+). It catalyses the reaction tetradecanoate + reduced [NADPH--hemoprotein reductase] + O2 = 13-hydroxytetradecanoate + oxidized [NADPH--hemoprotein reductase] + H2O + H(+). It carries out the reaction 4-nitrophenol + NADPH + O2 + H(+) = 4-nitrocatechol + NADP(+) + H2O. The protein operates within lipid metabolism; fatty acid metabolism. With respect to regulation, the omega-1 hydroxylase activity is stimulated by cytochrome b5. Its function is as follows. A cytochrome P450 monooxygenase involved in the metabolism of fatty acids. Mechanistically, uses molecular oxygen inserting one oxygen atom into a substrate, and reducing the second into a water molecule, with two electrons provided by NADPH via cytochrome P450 reductase (NADPH--hemoprotein reductase). Catalyzes the hydroxylation of carbon-hydrogen bonds. Hydroxylates fatty acids specifically at the omega-1 position displaying the highest catalytic activity for saturated fatty acids. May be involved in the oxidative metabolism of xenobiotics. In Homo sapiens (Human), this protein is Cytochrome P450 2E1.